A 261-amino-acid chain; its full sequence is Phosphonates import ATP-binding protein PhnC (261 aa).

Positions 9–253 (IQLKDVSKIY…VFDDIYNGGN (245 aa)) constitute an ABC transporter domain. An ATP-binding site is contributed by 42 to 49 (GLSGAGKS).

This sequence belongs to the ABC transporter superfamily. Phosphonates importer (TC 3.A.1.9.1) family. In terms of assembly, the complex is composed of two ATP-binding proteins (PhnC), two transmembrane proteins (PhnE) and a solute-binding protein (PhnD).

Its subcellular location is the cell membrane. It carries out the reaction phosphonate(out) + ATP + H2O = phosphonate(in) + ADP + phosphate + H(+). Its function is as follows. Part of the ABC transporter complex PhnCDE involved in phosphonates import. Responsible for energy coupling to the transport system. The polypeptide is Phosphonates import ATP-binding protein PhnC (Lactobacillus gasseri (strain ATCC 33323 / DSM 20243 / BCRC 14619 / CIP 102991 / JCM 1131 / KCTC 3163 / NCIMB 11718 / NCTC 13722 / AM63)).